A 265-amino-acid chain; its full sequence is F-box only protein 6 (265 aa).

Positions 3-50 (LVSINQLPENILLEVFMHVPARQLLRNCRPVCCLWRDLIDLVSLWKRK) constitute an F-box domain. The region spanning 71 to 252 (FYFLCSLRRN…VTNSSVVISH (182 aa)) is the FBA domain. Ser-251 bears the Phosphoserine mark.

In terms of assembly, part of a SCF (SKP1-cullin-F-box) protein ligase complex. Interacts with VCP, CHEK1 and CUL1.

Its subcellular location is the cytoplasm. Its pathway is protein modification; protein ubiquitination. Its function is as follows. Substrate-recognition component of some SCF (SKP1-CUL1-F-box protein)-type E3 ubiquitin ligase complexes. Involved in endoplasmic reticulum-associated degradation pathway (ERAD) for misfolded lumenal proteins by recognizing and binding sugar chains on unfolded glycoproteins that are retrotranslocated into the cytosol and promoting their ubiquitination and subsequent degradation. Able to recognize and bind denatured glycoproteins, which are modified with not only high-mannose but also complex-type oligosaccharides. Also recognizes sulfated glycans. Also involved in DNA damage response by specifically recognizing activated CHEK1 (phosphorylated on 'Ser-345'), promoting its ubiquitination and degradation. Ubiquitination of CHEK1 is required to ensure that activated CHEK1 does not accumulate as cells progress through S phase, or when replication forks encounter transient impediments during normal DNA replication. This is F-box only protein 6 (FBXO6) from Bos taurus (Bovine).